The chain runs to 251 residues: GTP cyclohydrolase 1 type 2 homolog (251 aa).

His63, His64, Asp101, His219, and Glu223 together coordinate a divalent metal cation.

Belongs to the GTP cyclohydrolase I type 2/NIF3 family. Toroid-shaped homohexamer. In the hexamer, 3 dimers assemble to form a ring-like structure surrounding a central hole.

This is GTP cyclohydrolase 1 type 2 homolog from Haemophilus influenzae (strain ATCC 51907 / DSM 11121 / KW20 / Rd).